A 339-amino-acid polypeptide reads, in one-letter code: Transcription factor IIIA (339 aa).

C2H2-type zinc fingers lie at residues 13 to 37 (YICS…LCKH), 43 to 67 (FPCK…SITH), 73 to 98 (FKCD…NRFH), 105 to 129 (YVCH…QFTH), 135 to 159 (YKCP…EKVH), 162 to 188 (YPCK…KECH), 192 to 214 (VMCD…KKTH), 221 to 246 (YCCP…QSFH), and 252 to 276 (FACE…SVVH). Basic and acidic residues-rich tracts occupy residues 275–288 (VHDP…EKCP) and 305–316 (KSKEKSAAKATE). The tract at residues 275-339 (VHDPEKRKLK…ETKGSLVIEK (65 aa)) is disordered.

In terms of tissue distribution, synthesized in oocytes and, in much lower levels, in somatic cells.

Its subcellular location is the nucleus. Involved in ribosomal large subunit biogenesis. Interacts with the internal control region (ICR) of approximately 50 bases within the 5S RNA genes, is required for correct transcription of these genes by RNA polymerase III. Also binds the transcribed 5S RNA's. In Xenopus borealis (Kenyan clawed frog), this protein is Transcription factor IIIA (gtf3a).